The following is a 232-amino-acid chain: 2,3,4,5-tetrahydropyridine-2,6-dicarboxylate N-acetyltransferase (232 aa).

This sequence belongs to the transferase hexapeptide repeat family. DapH subfamily.

It catalyses the reaction (S)-2,3,4,5-tetrahydrodipicolinate + acetyl-CoA + H2O = L-2-acetamido-6-oxoheptanedioate + CoA. The protein operates within amino-acid biosynthesis; L-lysine biosynthesis via DAP pathway; LL-2,6-diaminopimelate from (S)-tetrahydrodipicolinate (acetylase route): step 1/3. Its function is as follows. Catalyzes the transfer of an acetyl group from acetyl-CoA to tetrahydrodipicolinate. This Streptococcus pneumoniae serotype 2 (strain D39 / NCTC 7466) protein is 2,3,4,5-tetrahydropyridine-2,6-dicarboxylate N-acetyltransferase.